Consider the following 72-residue polypeptide: Sec-independent protein translocase protein TatA (72 aa).

Residues 1–21 traverse the membrane as a helical segment; sequence MAGLSIWHVVIFAIVVILLFG. A disordered region spans residues 47–72; the sequence is DEAASLNSPRTIDAQVKTSESTSVKS. A compositionally biased stretch (polar residues) spans 51 to 72; sequence SLNSPRTIDAQVKTSESTSVKS.

The protein belongs to the TatA/E family. The Tat system comprises two distinct complexes: a TatABC complex, containing multiple copies of TatA, TatB and TatC subunits, and a separate TatA complex, containing only TatA subunits. Substrates initially bind to the TatABC complex, which probably triggers association of the separate TatA complex to form the active translocon.

The protein localises to the cell inner membrane. Part of the twin-arginine translocation (Tat) system that transports large folded proteins containing a characteristic twin-arginine motif in their signal peptide across membranes. TatA could form the protein-conducting channel of the Tat system. The sequence is that of Sec-independent protein translocase protein TatA from Acinetobacter baumannii (strain AB307-0294).